A 487-amino-acid chain; its full sequence is UPF0324 membrane protein NE0724 (487 aa).

A run of 11 helical transmembrane segments spans residues 19–38, 71–93, 100–119, 139–161, 181–200, 204–226, 269–291, 350–369, 389–411, 426–443, and 456–478; these read WAVW…LWGW, PALS…AWSM, FFIG…IIGN, LSLG…GNFF, AIVF…AGFI, VMTG…YALG, VSIL…YTAI, IWID…VWVY, FPKF…SSGS, GPMR…IGII, and ALLY…AWIF.

This sequence belongs to the UPF0324 family.

It is found in the cell membrane. This chain is UPF0324 membrane protein NE0724, found in Nitrosomonas europaea (strain ATCC 19718 / CIP 103999 / KCTC 2705 / NBRC 14298).